Here is a 177-residue protein sequence, read N- to C-terminus: uncharacterized protein (177 aa).

The next 4 membrane-spanning stretches (helical) occupy residues 20-42 (NLVS…LLAL), 62-84 (VVLW…VSLS), 94-116 (AMSS…GYFI), and 136-158 (GLLY…IIVA).

Its subcellular location is the cell membrane. This is an uncharacterized protein from Methanocaldococcus jannaschii (strain ATCC 43067 / DSM 2661 / JAL-1 / JCM 10045 / NBRC 100440) (Methanococcus jannaschii).